A 309-amino-acid chain; its full sequence is Probable inactive poly [ADP-ribose] polymerase SRO5 (309 aa).

A PARP catalytic domain is found at 28–255; that stretch reads CDSSSDRSFA…AFPVLIKALS (228 aa). Residues 238 to 309 form the RST domain; sequence KRLRSPWMAF…IKACGHKVQH (72 aa).

As to quaternary structure, interacts with dehydration-responsive DREB2 proteins and a number of transcription factors belonging to several protein families.

It localises to the nucleus matrix. In terms of biological role, probable inactive ADP-ribosyltransferase that may be involved in stress and developmental responses. The protein is Probable inactive poly [ADP-ribose] polymerase SRO5 (SRO5) of Arabidopsis thaliana (Mouse-ear cress).